Here is a 360-residue protein sequence, read N- to C-terminus: Replication-associated protein (360 aa).

The CRESS-DNA virus Rep endonuclease domain maps to 11-114 (SHRNANTFLT…PLAVFERGTF (104 aa)). The RCR-1 signature appears at 18 to 21 (FLTY). 3 residues coordinate a divalent metal cation: glutamate 52, histidine 60, and histidine 62. The short motif at 60–62 (HLH) is the RCR-2 element. Residue tyrosine 100 is the For DNA cleavage activity of the active site. Positions 100-103 (YILK) match the RCR-3 motif. An a divalent metal cation-binding site is contributed by glutamate 104. The interval 175 to 187 (SANKLFPEIQEEF) is oligomerization. Position 229 to 236 (229 to 236 (GPTRTGKS)) interacts with ATP. Residues 252–270 (VDWSSYNEDAIYNIVDDIP) are transactivation. Positions 292 to 303 (KYGKKKKVQKKS) match the Nuclear localization signal motif.

The protein belongs to the geminiviridae Rep protein family. Homooligomer. Rep binds to repeated DNA motifs (iterons). Forms the O-complex, which is a Rep-DNA complex involved in the initiation of RCR. Part of the C- and V-complexes which are RepA-Rep-DNA complexes involved in the c-sense and v-sense transcription. Mg(2+) is required as a cofactor. The cofactor is Mn(2+).

Its subcellular location is the host nucleus. Its function is as follows. Essential for the replication of viral ssDNA. The closed circular ssDNA genome is first converted to a superhelical dsDNA. Rep binds a specific region at the genome origin of replication. It introduces an endonucleolytic nick within the conserved sequence 5'-TAATATTAC-3' in the intergenic region of the genome present in all geminiviruses, thereby initiating the rolling circle replication (RCR). Following cleavage, binds covalently to the 5'-phosphate of DNA as a tyrosyl ester. The cleavage gives rise to a free 3'-OH that serves as a primer for the cellular DNA polymerase. The polymerase synthesizes the (+) strand DNA by rolling circle mechanism. After one round of replication, a Rep-catalyzed nucleotidyl transfer reaction releases a circular single-stranded virus genome, thereby terminating the replication. Displays origin-specific DNA cleavage, nucleotidyl transferase, ATPase and helicase activities. Acts as an inhibitor of C-sense gene transcription. This chain is Replication-associated protein, found in Avena sativa (Oat).